Here is a 789-residue protein sequence, read N- to C-terminus: Protein translocase subunit SecA 2 (789 aa).

ATP-binding positions include Gln79, 97-101 (GEGKT), and Asp487.

This sequence belongs to the SecA family. Monomer and homodimer. Part of the essential Sec protein translocation apparatus which comprises SecA, SecYEG and auxiliary proteins SecDF. Other proteins may also be involved.

Its subcellular location is the cell membrane. The protein localises to the cytoplasm. The catalysed reaction is ATP + H2O + cellular proteinSide 1 = ADP + phosphate + cellular proteinSide 2.. Functionally, part of the Sec protein translocase complex. Interacts with the SecYEG preprotein conducting channel. Has a central role in coupling the hydrolysis of ATP to the transfer of proteins into and across the cell membrane, serving as an ATP-driven molecular motor driving the stepwise translocation of polypeptide chains across the membrane. The chain is Protein translocase subunit SecA 2 from Pediococcus pentosaceus (strain ATCC 25745 / CCUG 21536 / LMG 10740 / 183-1w).